The sequence spans 78 residues: Toxin BmTxKS4 (78 aa).

Positions 1 to 21 (MKLKISFLILVLFSVFFAIEG) are cleaved as a signal peptide. Residues 22-32 (IIKWFPASVNG) constitute a propeptide that is removed on maturation.

Post-translationally, contains 3 disulfide bonds. As to expression, expressed by the venom gland.

Its subcellular location is the secreted. In terms of biological role, reversibly inhibits potassium channels. The protein is Toxin BmTxKS4 of Olivierus martensii (Manchurian scorpion).